The following is a 256-amino-acid chain: Complex I assembly factor TIMMDC1, mitochondrial (256 aa).

Residues 1 to 27 (MAQSDPPKSPDPPLPTSIRNPQTPESG) are disordered. Helical transmembrane passes span 111–131 (WGWR…GLTV) and 159–179 (VGLL…GALI).

This sequence belongs to the Tim17/Tim22/Tim23 family. As to quaternary structure, associates with the intermediate 315 kDa subcomplex of incompletely assembled complex I.

The protein resides in the mitochondrion membrane. Chaperone protein involved in the assembly of the mitochondrial NADH:ubiquinone oxidoreductase complex (complex I). Participates in constructing the membrane arm of complex I. This is Complex I assembly factor TIMMDC1, mitochondrial (timmdc1) from Xenopus laevis (African clawed frog).